The chain runs to 247 residues: Cell division protein ZapD (247 aa).

It belongs to the ZapD family. As to quaternary structure, interacts with FtsZ.

The protein resides in the cytoplasm. Cell division factor that enhances FtsZ-ring assembly. Directly interacts with FtsZ and promotes bundling of FtsZ protofilaments, with a reduction in FtsZ GTPase activity. The polypeptide is Cell division protein ZapD (Shigella dysenteriae serotype 1 (strain Sd197)).